Here is a 451-residue protein sequence, read N- to C-terminus: Tubulin alpha-1B chain (451 aa).

An MREC motif motif is present at residues 1 to 4 (MREC). Positions 10, 11, 12, and 15 each coordinate GTP. Lys40 carries the post-translational modification N6,N6,N6-trimethyllysine; alternate. An N6-acetyllysine; alternate modification is found at Lys40. Ser48 is subject to Phosphoserine. The GTP site is built by Glu71, Ala99, Ser140, Gly143, Gly144, Thr145, Gly146, Thr179, Glu183, Asn206, Tyr224, and Asn228. Glu71 contacts Mg(2+). Position 232 is a phosphoserine (Ser232). Leu252 contributes to the GTP binding site. The active site involves Glu254. 3'-nitrotyrosine is present on Tyr282. A Glycyl lysine isopeptide (Lys-Gly) (interchain with G-Cter in ubiquitin) cross-link involves residue Lys326. Residue Arg339 is modified to Omega-N-methylarginine. Lys370 participates in a covalent cross-link: Glycyl lysine isopeptide (Lys-Gly) (interchain with G-Cter in ubiquitin). The residue at position 439 (Ser439) is a Phosphoserine. 5-glutamyl polyglutamate is present on residues Glu443 and Glu445. At Tyr451 the chain carries 3'-nitrotyrosine.

It belongs to the tubulin family. As to quaternary structure, heterodimer of alpha- and beta-tubulin. A typical microtubule is a hollow water-filled tube with an outer diameter of 25 nm and an inner diameter of 15 nM. Alpha-beta heterodimers associate head-to-tail to form protofilaments running lengthwise along the microtubule wall with the beta-tubulin subunit facing the microtubule plus end conferring a structural polarity. Microtubules usually have 13 protofilaments but different protofilament numbers can be found in some organisms and specialized cells. Interacts with gamma-tubulin; the interaction allows microtubules to nucleate from the gamma-tubulin ring complex (gTuRC). Nascent microtubule interacts (via alpha-tubulin MREC motif) with TTC5/STRAP; this interaction may result in tubulin mRNA-targeted degradation. Component of sperm flagellar doublet microtubules. It depends on Mg(2+) as a cofactor. In terms of processing, some glutamate residues at the C-terminus are polyglycylated, resulting in polyglycine chains on the gamma-carboxyl group. Glycylation is mainly limited to tubulin incorporated into axonemes (cilia and flagella) whereas glutamylation is prevalent in neuronal cells, centrioles, axonemes, and the mitotic spindle. Both modifications can coexist on the same protein on adjacent residues, and lowering polyglycylation levels increases polyglutamylation, and reciprocally. Cilia and flagella glycylation is required for their stability and maintenance. Flagella glycylation controls sperm motility. Some glutamate residues at the C-terminus are polyglutamylated, resulting in polyglutamate chains on the gamma-carboxyl group. Polyglutamylation plays a key role in microtubule severing by spastin (SPAST). SPAST preferentially recognizes and acts on microtubules decorated with short polyglutamate tails: severing activity by SPAST increases as the number of glutamates per tubulin rises from one to eight, but decreases beyond this glutamylation threshold. Glutamylation is also involved in cilia motility. Post-translationally, acetylation of alpha chains at Lys-40 is located inside the microtubule lumen. This modification has been correlated with increased microtubule stability, intracellular transport and ciliary assembly. In terms of processing, methylation of alpha chains at Lys-40 is found in mitotic microtubules and is required for normal mitosis and cytokinesis contributing to genomic stability. Nitration of Tyr-451 is irreversible and interferes with normal dynein intracellular distribution. Post-translationally, undergoes a tyrosination/detyrosination cycle, the cyclic removal and re-addition of a C-terminal tyrosine residue by the enzymes tubulin tyrosine carboxypeptidase (MATCAP1, VASH1 or VASH2) and tubulin tyrosine ligase (TTL), respectively. In terms of processing, tyrosination promotes microtubule interaction with CAP-Gly domain-containing proteins such as CLIP1, CLIP2 and DCTN1. Tyrosination regulates the initiation of dynein-dynactin motility via interaction with DCTN1, which brings the dynein-dynactin complex into contact with microtubules. In neurons, tyrosinated tubulins mediate the initiation of retrograde vesicle transport. Detyrosination is involved in metaphase plate congression by guiding chromosomes during mitosis: detyrosination promotes interaction with CENPE, promoting pole-proximal transport of chromosomes toward the equator. Detyrosination increases microtubules-dependent mechanotransduction in dystrophic cardiac and skeletal muscle. In cardiomyocytes, detyrosinated microtubules are required to resist to contractile compression during contraction: detyrosination promotes association with desmin (DES) at force-generating sarcomeres, leading to buckled microtubules and mechanical resistance to contraction.

Its subcellular location is the cytoplasm. It is found in the cytoskeleton. It carries out the reaction GTP + H2O = GDP + phosphate + H(+). Tubulin is the major constituent of microtubules, protein filaments consisting of alpha- and beta-tubulin heterodimers. Microtubules grow by the addition of GTP-tubulin dimers to the microtubule end, where a stabilizing cap forms. Below the cap, tubulin dimers are in GDP-bound state, owing to GTPase activity of alpha-tubulin. This is Tubulin alpha-1B chain (TUBA1B) from Pan troglodytes (Chimpanzee).